The chain runs to 670 residues: MADSPVDSSPAPETSNGTPPSNGTSPSNESSPPTPPSSPPPSSISAPPPDISASFSPPPAPPTQETSPPTSPSSSPPVVANPSPQTPENPSPPAPEGSTPVTPPAPPQTPSNQSPERPTPPSPGANDDRNRTNGGNNNRDGSTPSPPSSGNRTSGDGGSPSPPRSISPPQNSGDSDSSSGNHPQANIGLIIGVLVGAGLLLLLAVCICICCNRKKKKKSPQVNHMHYYNNNPYGGAPSGNGGYYKGTPQDHVVNMAGQGGGNWGPQQPVSGPHSDASNLTGRTAIPSPQAATLGHNQSTFTYDELSIATEGFAQSNLLGQGGFGYVHKGVLPSGKEVAVKSLKLGSGQGEREFQAEVDIISRVHHRHLVSLVGYCISGGQRLLVYEFIPNNTLEFHLHGKGRPVLDWPTRVKIALGSARGLAYLHEDCHPRIIHRDIKAANILLDFSFETKVADFGLAKLSQDNYTHVSTRVMGTFGYLAPEYASSGKLSDKSDVFSFGVMLLELITGRPPLDLTGEMEDSLVDWARPLCLKAAQDGDYNQLADPRLELNYSHQEMVQMASCAAAAIRHSARRRPKMSQIVRALEGDMSMDDLSEGTRPGQSTYLSPGSVSSEYDASSYTADMKKFKKLALENKEYQSSEYGGTSEYGLNPSASSSEEMNRGSMKRNPQL.

Positions 1-181 (MADSPVDSSP…SGDSDSSSGN (181 aa)) are disordered. Residues 1–186 (MADSPVDSSP…SSSGNHPQAN (186 aa)) lie on the Extracellular side of the membrane. Over residues 14-31 (TSNGTPPSNGTSPSNESS) the composition is skewed to low complexity. Residues asparagine 22 and asparagine 28 are each glycosylated (N-linked (GlcNAc...) asparagine). Composition is skewed to pro residues over residues 32–62 (PPTP…PAPP) and 84–109 (PQTP…PPQT). A glycan (N-linked (GlcNAc...) asparagine) is linked at asparagine 130. Residues 132–141 (TNGGNNNRDG) show a composition bias toward low complexity. Asparagine 151 carries N-linked (GlcNAc...) asparagine glycosylation. The segment covering 167–181 (SPPQNSGDSDSSSGN) has biased composition (low complexity). Residues 187-207 (IGLIIGVLVGAGLLLLLAVCI) form a helical membrane-spanning segment. Topologically, residues 208–670 (CICCNRKKKK…RGSMKRNPQL (463 aa)) are cytoplasmic. Threonine 301 bears the Phosphothreonine mark. The Protein kinase domain occupies 312–590 (FAQSNLLGQG…VRALEGDMSM (279 aa)). ATP contacts are provided by residues 318-326 (LGQGGFGYV) and lysine 340. Tyrosine 385 is subject to Phosphotyrosine. Aspartate 436 functions as the Proton acceptor in the catalytic mechanism. Position 469 is a phosphoserine (serine 469). Phosphothreonine occurs at positions 470 and 475. The residue at position 483 (tyrosine 483) is a Phosphotyrosine. Disordered stretches follow at residues 589-613 (SMDD…VSSE) and 635-670 (EYQS…NPQL). Over residues 599-613 (PGQSTYLSPGSVSSE) the composition is skewed to polar residues.

The protein belongs to the protein kinase superfamily. Ser/Thr protein kinase family. As to expression, mostly expressed in flower buds.

It localises to the cell membrane. The catalysed reaction is L-seryl-[protein] + ATP = O-phospho-L-seryl-[protein] + ADP + H(+). It carries out the reaction L-threonyl-[protein] + ATP = O-phospho-L-threonyl-[protein] + ADP + H(+). This Arabidopsis thaliana (Mouse-ear cress) protein is Proline-rich receptor-like protein kinase PERK5 (PERK5).